Reading from the N-terminus, the 312-residue chain is Fasciclin-like arabinogalactan protein elcF (312 aa).

A signal peptide spans 1–16 (MKLFTLLLPALTSAHS). FAS1 domains follow at residues 17-160 (LSTL…NASM) and 162-289 (LPHN…DKVL). N-linked (GlcNAc...) asparagine glycans are attached at residues Asn48, Asn68, Asn113, Asn157, and Asn165.

The protein belongs to the fasciclin-like AGP family.

It functions in the pathway secondary metabolite biosynthesis. Functionally, fasciclin-like arabinogalactan protein; part of the gene cluster that mediates the biosynthesis of elsinochrome C, a perelyenequinone phytotoxin structurally similar to cercosporin. The first step of elsinochrome C biosynthesis is performed by the polyketide synthase elcA which catalyzes the formation of nor-toralactone. The starter unit acyltransferase (SAT) domain of elcA initiates polyketide extension by the selective utilization of acetyl-CoA, which is elongated to the heptaketide in the beta-ketoacyl synthase (KS) domain by successive condensations with six malonyl units introduced by the malonyl acyltransferase (MAT) domain. The product template (PT) domain catalyzes C4-C9 and C2-C11 aldol cyclizations and dehydrations to a trihydroxynaphthalene, which is thought to be delivered to the thioesterase (TE) domain for product release. The bifunctional enzyme elcB then methylates nor-toralactone to toralactone before conducting an unusual oxidative aromatic ring opening. The next step in perylenequinone biosynthesis is an O-methylation at the nascent OH-6 of the elcB product performed by the O-methyltransferase elcD. The oxidative coupling of the two monomeric naphthol units in perylenequinone biosynthesis is catalyzed by the FAD-dependent monooxygenase elcE and the multicopper oxidase elcG. ElcG might catalyze the first intermolecular coupling in a regio- and stereo-selective manner via a phenol radical coupling mechanism and the elcE could forge the second C-C bond intramolecularly via a hydride transfer mechanism. The fasciclin domain-containing protein elcF might also play a role duting this step. The last piece of the puzzle in the biosynthesis of elsinochrome C is the additional annulation by enolate coupling to afford the dihydrobenzo(ghi)perylenequinone system, catalyzed by the FAD-dependent monooxygenase elcH. The polypeptide is Fasciclin-like arabinogalactan protein elcF (Phaeosphaeria nodorum (strain SN15 / ATCC MYA-4574 / FGSC 10173) (Glume blotch fungus)).